The chain runs to 588 residues: DNA ligase (588 aa).

Glutamate 248 is an ATP binding site. Catalysis depends on lysine 250, which acts as the N6-AMP-lysine intermediate. ATP contacts are provided by arginine 255, arginine 270, glutamate 300, phenylalanine 341, arginine 418, and lysine 424.

This sequence belongs to the ATP-dependent DNA ligase family. It depends on Mg(2+) as a cofactor.

It catalyses the reaction ATP + (deoxyribonucleotide)n-3'-hydroxyl + 5'-phospho-(deoxyribonucleotide)m = (deoxyribonucleotide)n+m + AMP + diphosphate.. Functionally, DNA ligase that seals nicks in double-stranded DNA during DNA replication, DNA recombination and DNA repair. The sequence is that of DNA ligase from Thermoplasma volcanium (strain ATCC 51530 / DSM 4299 / JCM 9571 / NBRC 15438 / GSS1).